Reading from the N-terminus, the 289-residue chain is ATP synthase gamma chain (289 aa).

Belongs to the ATPase gamma chain family. In terms of assembly, F-type ATPases have 2 components, CF(1) - the catalytic core - and CF(0) - the membrane proton channel. CF(1) has five subunits: alpha(3), beta(3), gamma(1), delta(1), epsilon(1). CF(0) has three main subunits: a, b and c.

It is found in the cell inner membrane. Functionally, produces ATP from ADP in the presence of a proton gradient across the membrane. The gamma chain is believed to be important in regulating ATPase activity and the flow of protons through the CF(0) complex. The protein is ATP synthase gamma chain of Janthinobacterium sp. (strain Marseille) (Minibacterium massiliensis).